We begin with the raw amino-acid sequence, 541 residues long: CTP synthase (541 aa).

Residues 1–265 are amidoligase domain; the sequence is MTRFIFITGG…DAVVCRHFGL (265 aa). S13 is a CTP binding site. UTP is bound at residue S13. 14–19 is a binding site for ATP; that stretch reads SLGKGL. Residue Y54 participates in L-glutamine binding. ATP is bound at residue D71. Mg(2+) contacts are provided by D71 and E139. CTP contacts are provided by residues 146-148, 186-191, and K222; these read DIE and KTKPTQ. UTP contacts are provided by residues 186–191 and K222; that span reads KTKPTQ. A Glutamine amidotransferase type-1 domain is found at 290–540; it reads TIAIVGKYIS…IAAAVRQSRL (251 aa). Position 352 (G352) interacts with L-glutamine. Catalysis depends on C379, which acts as the Nucleophile; for glutamine hydrolysis. L-glutamine is bound by residues 380–383, E403, and R468; that span reads FGMQ. Catalysis depends on residues H513 and E515.

It belongs to the CTP synthase family. Homotetramer.

It catalyses the reaction UTP + L-glutamine + ATP + H2O = CTP + L-glutamate + ADP + phosphate + 2 H(+). It carries out the reaction L-glutamine + H2O = L-glutamate + NH4(+). The enzyme catalyses UTP + NH4(+) + ATP = CTP + ADP + phosphate + 2 H(+). It participates in pyrimidine metabolism; CTP biosynthesis via de novo pathway; CTP from UDP: step 2/2. Allosterically activated by GTP, when glutamine is the substrate; GTP has no effect on the reaction when ammonia is the substrate. The allosteric effector GTP functions by stabilizing the protein conformation that binds the tetrahedral intermediate(s) formed during glutamine hydrolysis. Inhibited by the product CTP, via allosteric rather than competitive inhibition. Its function is as follows. Catalyzes the ATP-dependent amination of UTP to CTP with either L-glutamine or ammonia as the source of nitrogen. Regulates intracellular CTP levels through interactions with the four ribonucleotide triphosphates. In Paramagnetospirillum magneticum (strain ATCC 700264 / AMB-1) (Magnetospirillum magneticum), this protein is CTP synthase.